The following is a 297-amino-acid chain: Tyrosine recombinase XerD (297 aa).

Residues 1–87 (MLEYAIEDFF…SIRSFHQFLI (87 aa)) form the Core-binding (CB) domain. In terms of domain architecture, Tyr recombinase spans 108 to 291 (KLPDILSQDE…TKARLKDMYQ (184 aa)). Catalysis depends on residues arginine 147, lysine 171, histidine 243, arginine 246, and histidine 269. Tyrosine 278 serves as the catalytic O-(3'-phospho-DNA)-tyrosine intermediate.

This sequence belongs to the 'phage' integrase family. XerD subfamily. Forms a cyclic heterotetrameric complex composed of two molecules of XerC and two molecules of XerD.

The protein resides in the cytoplasm. Its function is as follows. Site-specific tyrosine recombinase, which acts by catalyzing the cutting and rejoining of the recombining DNA molecules. The XerC-XerD complex is essential to convert dimers of the bacterial chromosome into monomers to permit their segregation at cell division. It also contributes to the segregational stability of plasmids. The protein is Tyrosine recombinase XerD of Oceanobacillus iheyensis (strain DSM 14371 / CIP 107618 / JCM 11309 / KCTC 3954 / HTE831).